Here is a 443-residue protein sequence, read N- to C-terminus: Xaa-Pro dipeptidase (443 aa).

5 residues coordinate Mn(2+): Asp-246, Asp-257, His-339, Glu-384, and Glu-423.

Belongs to the peptidase M24B family. Bacterial-type prolidase subfamily. Mn(2+) is required as a cofactor.

It carries out the reaction Xaa-L-Pro dipeptide + H2O = an L-alpha-amino acid + L-proline. Functionally, splits dipeptides with a prolyl residue in the C-terminal position. In Cronobacter sakazakii (strain ATCC BAA-894) (Enterobacter sakazakii), this protein is Xaa-Pro dipeptidase.